A 181-amino-acid chain; its full sequence is Inner membrane-spanning protein YciB (181 aa).

The next 5 membrane-spanning stretches (helical) occupy residues 10–30, 50–70, 72–92, 118–138, and 148–168; these read LVIF…GALI, MHLI…ILHD, SFIK…LGVS, VTWY…YVAF, and FKVF…VVYL.

This sequence belongs to the YciB family.

The protein resides in the cell inner membrane. Its function is as follows. Plays a role in cell envelope biogenesis, maintenance of cell envelope integrity and membrane homeostasis. The chain is Inner membrane-spanning protein YciB from Shewanella pealeana (strain ATCC 700345 / ANG-SQ1).